A 59-amino-acid chain; its full sequence is Movement protein TGBp3 (59 aa).

At 1–3 (MHL) the chain is on the lumenal side. The chain crosses the membrane as a helical span at residues 4 to 21 (AIVGALTLVLTLFVLHYT). The Cytoplasmic segment spans residues 22-59 (TKDDRCYILINGHSAFTNCPASPDLAKVISQLKPHNHG).

It belongs to the Tymovirales TGBp3 protein family.

It localises to the host endoplasmic reticulum membrane. Functionally, plays a role in viral cell-to-cell propagation, by facilitating genome transport to neighboring plant cells through plasmosdesmata. May induce the formation of granular vesicles derived from the Endoplasmic reticulum, which align on actin filaments. The chain is Movement protein TGBp3 from Chenopodium album (Fat hen).